Here is a 136-residue protein sequence, read N- to C-terminus: Large-conductance mechanosensitive channel (136 aa).

2 consecutive transmembrane segments (helical) span residues 9–29 and 79–99; these read AFAS…GAAF and IQTI…VKAI.

This sequence belongs to the MscL family. In terms of assembly, homopentamer.

The protein localises to the cell inner membrane. Its function is as follows. Channel that opens in response to stretch forces in the membrane lipid bilayer. May participate in the regulation of osmotic pressure changes within the cell. The protein is Large-conductance mechanosensitive channel of Shewanella baltica (strain OS223).